The primary structure comprises 435 residues: BAHD acyltransferase BIA1 (435 aa).

Catalysis depends on proton acceptor residues His-151 and Asp-369.

It belongs to the plant acyltransferase family. In terms of tissue distribution, mostly expressed in roots (particularly in the root elongation zone), and, to a lower extent, in seedling, leaves (especially in hydathodes), siliques (e.g. in developing seeds) and flowers.

Its subcellular location is the cytoplasm. In terms of biological role, monitors brassinosteroids (BR) responses and homeostasis, particularly in the root and hypocotyl in darkness. Promotes flavonoid biosynthesis. The protein is BAHD acyltransferase BIA1 of Arabidopsis thaliana (Mouse-ear cress).